Reading from the N-terminus, the 81-residue chain is Beta-catenin-interacting protein 1 (81 aa).

Ser-59 is subject to Phosphoserine.

Belongs to the CTNNBIP1 family. Binds CTNNB1.

The protein resides in the cytoplasm. It is found in the nucleus. Functionally, prevents the interaction between CTNNB1 and TCF family members, and acts as a negative regulator of the Wnt signaling pathway. The protein is Beta-catenin-interacting protein 1 (CTNNBIP1) of Bos taurus (Bovine).